The primary structure comprises 70 residues: Large ribosomal subunit protein bL31 (70 aa).

The Zn(2+) site is built by C16, C18, C37, and C40.

Belongs to the bacterial ribosomal protein bL31 family. Type A subfamily. Part of the 50S ribosomal subunit. Requires Zn(2+) as cofactor.

Functionally, binds the 23S rRNA. The polypeptide is Large ribosomal subunit protein bL31 (Cronobacter sakazakii (strain ATCC BAA-894) (Enterobacter sakazakii)).